Reading from the N-terminus, the 150-residue chain is Ribonuclease H (150 aa).

The RNase H type-1 domain maps to 1–141; the sequence is MKSIEVHTDG…VDVLARNQAI (141 aa). Asp9, Glu47, Asp69, and Asp133 together coordinate Mg(2+).

The protein belongs to the RNase H family. As to quaternary structure, monomer. Mg(2+) is required as a cofactor.

The protein localises to the cytoplasm. It carries out the reaction Endonucleolytic cleavage to 5'-phosphomonoester.. Its function is as follows. Endonuclease that specifically degrades the RNA of RNA-DNA hybrids. This chain is Ribonuclease H, found in Xanthomonas campestris pv. campestris (strain 8004).